The following is a 51-amino-acid chain: Light-harvesting protein B-800/850 beta chain (51 aa).

Residues 2 to 23 lie on the Cytoplasmic side of the membrane; sequence ADDANKVWPSGLTTAEAEELQK. A helical membrane pass occupies residues 24-46; sequence GLVDGTRVFGVIAVLAHILAYAY. A bacteriochlorophyll is bound at residue His40. Residues 47–51 lie on the Periplasmic side of the membrane; that stretch reads TPWLH.

Belongs to the antenna complex beta subunit family. In terms of assembly, an alpha/beta heterodimer conjugated to 3 bacteriochlorophyll molecules. The core complex is formed by different alpha and beta chains, binding bacteriochlorophyll molecules, and arranged most probably in tetrameric structures disposed around the reaction center. The non-pigmented gamma chains may constitute additional components.

It localises to the cell inner membrane. In terms of biological role, antenna complexes are light-harvesting systems, which transfer the excitation energy to the reaction centers. The protein is Light-harvesting protein B-800/850 beta chain (pucB) of Rubrivivax gelatinosus (Rhodocyclus gelatinosus).